Consider the following 306-residue polypeptide: tRNA dimethylallyltransferase (306 aa).

Gly9–Thr16 contacts ATP. Thr11 to Thr16 contacts substrate. The interval Asp34–Gln37 is interaction with substrate tRNA.

This sequence belongs to the IPP transferase family. Monomer. Requires Mg(2+) as cofactor.

The catalysed reaction is adenosine(37) in tRNA + dimethylallyl diphosphate = N(6)-dimethylallyladenosine(37) in tRNA + diphosphate. Catalyzes the transfer of a dimethylallyl group onto the adenine at position 37 in tRNAs that read codons beginning with uridine, leading to the formation of N6-(dimethylallyl)adenosine (i(6)A). The protein is tRNA dimethylallyltransferase of Roseiflexus castenholzii (strain DSM 13941 / HLO8).